The sequence spans 136 residues: Histone H3.2 (136 aa).

Positions methionine 1 to glutamine 20 are disordered. Lysine 5 carries the N6-methylated lysine modification. N6-acetyllysine; alternate is present on lysine 10. Lysine 10 carries the post-translational modification N6-methylated lysine; alternate. Residue serine 11 is modified to Phosphoserine. Phosphothreonine is present on threonine 12. Lysine 15 carries the N6-acetyllysine modification. An N6-acetyllysine; alternate mark is found at lysine 19 and lysine 24. Lysine 19 and lysine 24 each carry N6-methylated lysine; alternate. Position 37 is an N6-methylated lysine (lysine 37).

It belongs to the histone H3 family. As to quaternary structure, the nucleosome is a histone octamer containing two molecules each of H2A, H2B, H3 and H4 assembled in one H3-H4 heterotetramer and two H2A-H2B heterodimers. The octamer wraps approximately 147 bp of DNA. Post-translationally, acetylation is generally linked to gene activation. Can be acetylated to form H3K9ac, H3K14ac, H3K18ac and H3K23ac. H3K9ac could compete with H3K9me and prevent gene silencing. H3K9ac is restricted to euchromatin. In terms of processing, methylated to form mainly H3K4me, H3K9me, H3K18me, H3K23me and H3K36me. H3K4me1/2/3, H3K9me3 and H3K36me1/2/3 are typical marks for euchromatin, whereas heterochromatic chromocenters are enriched in H3K9me1/2. H2BK143ub1 is probably prerequisite for H3K4me. Can be phosphorylated to form H3S10ph and H3T11ph.

It is found in the nucleus. The protein localises to the chromosome. Core component of nucleosome. Nucleosomes wrap and compact DNA into chromatin, limiting DNA accessibility to the cellular machineries which require DNA as a template. Histones thereby play a central role in transcription regulation, DNA repair, DNA replication and chromosomal stability. DNA accessibility is regulated via a complex set of post-translational modifications of histones, also called histone code, and nucleosome remodeling. In Cichorium intybus (Chicory), this protein is Histone H3.2.